A 398-amino-acid chain; its full sequence is Fe-regulated protein 8 (398 aa).

Functionally, protein of unknown function; part of the gene cluster that mediates the biosynthesis of siderophore ferrichrome A which is contributing to organismal virulence. The sequence is that of Fe-regulated protein 8 from Mycosarcoma maydis (Corn smut fungus).